We begin with the raw amino-acid sequence, 551 residues long: Cytochrome c oxidase subunit 1 (551 aa).

A helical membrane pass occupies residues 34–54 (TLYLYSGVWGGLFGASLSLMI). G62 contacts Ca(2+). H79 lines the Fe(II)-heme a pocket. A run of 6 helical transmembrane segments spans residues 81 to 101 (LMMI…NWLI), 126 to 146 (ALYL…GWTI), 163 to 183 (VLIV…INFA), 209 to 229 (TAVL…MILF), 252 to 272 (LFWF…FGVM), and 285 to 305 (VFGL…GCMV). Residue H258 coordinates Cu cation. A cross-link (1'-histidyl-3'-tyrosine (His-Tyr)) is located at residues 258–262 (HPEVY). Y262 lines the O2 pocket. Residues H308 and H309 each contribute to the Cu cation site. Helical transmembrane passes span 326–346 (ATMV…ATMA) and 356–376 (AYWS…GVLL). Mg(2+)-binding residues include H386 and D387. 3 consecutive transmembrane segments (helical) span residues 391 to 411 (VVAH…FCGL), 432 to 452 (FMAM…LGLS), and 475 to 495 (GSAV…EALV). A heme a3-binding site is contributed by H394. H396 serves as a coordination point for Fe(II)-heme a.

The protein belongs to the heme-copper respiratory oxidase family. As to quaternary structure, component of the cytochrome c oxidase (complex IV, CIV), a multisubunit enzyme composed of a catalytic core of 3 subunits and several supernumerary subunits. The complex exists as a monomer or a dimer and forms supercomplexes (SCs) in the inner mitochondrial membrane with ubiquinol-cytochrome c oxidoreductase (cytochrome b-c1 complex, complex III, CIII). Heme is required as a cofactor. It depends on Cu cation as a cofactor.

The protein resides in the mitochondrion inner membrane. The enzyme catalyses 4 Fe(II)-[cytochrome c] + O2 + 8 H(+)(in) = 4 Fe(III)-[cytochrome c] + 2 H2O + 4 H(+)(out). It functions in the pathway energy metabolism; oxidative phosphorylation. In terms of biological role, component of the cytochrome c oxidase, the last enzyme in the mitochondrial electron transport chain which drives oxidative phosphorylation. The respiratory chain contains 3 multisubunit complexes succinate dehydrogenase (complex II, CII), ubiquinol-cytochrome c oxidoreductase (cytochrome b-c1 complex, complex III, CIII) and cytochrome c oxidase (complex IV, CIV), that cooperate to transfer electrons derived from NADH and succinate to molecular oxygen, creating an electrochemical gradient over the inner membrane that drives transmembrane transport and the ATP synthase. Cytochrome c oxidase is the component of the respiratory chain that catalyzes the reduction of oxygen to water. Electrons originating from reduced cytochrome c in the intermembrane space (IMS) are transferred via the dinuclear copper A center (CU(A)) of subunit 2 and heme A of subunit 1 to the active site in subunit 1, a binuclear center (BNC) formed by heme A3 and copper B (CU(B)). The BNC reduces molecular oxygen to 2 water molecules using 4 electrons from cytochrome c in the IMS and 4 protons from the mitochondrial matrix. The chain is Cytochrome c oxidase subunit 1 (COI) from Mytilus edulis (Blue mussel).